Reading from the N-terminus, the 231-residue chain is Protein N-terminal glutamine amidohydrolase (231 aa).

The disordered stretch occupies residues 1 to 21 (MADDRVAGGATPPPPPPPPPL). Pro residues predominate over residues 11–21 (TPPPPPPPPPL). Active-site residues include Cys-33, His-89, and Asp-108.

This sequence belongs to the NTAQ1 family. As to quaternary structure, monomer.

It carries out the reaction N-terminal L-glutaminyl-[protein] + H2O = N-terminal L-glutamyl-[protein] + NH4(+). In terms of biological role, mediates the side-chain deamidation of N-terminal glutamine residues to glutamate, an important step in N-end rule pathway of protein degradation. Conversion of the resulting N-terminal glutamine to glutamate renders the protein susceptible to arginylation, polyubiquitination and degradation as specified by the N-end rule. Does not act on substrates with internal or C-terminal glutamine and does not act on non-glutamine residues in any position. This Oryza sativa subsp. indica (Rice) protein is Protein N-terminal glutamine amidohydrolase.